The sequence spans 73 residues: Guanine nucleotide-binding protein G(I)/G(S)/G(O) subunit gamma-11 (73 aa).

The segment at 54–73 (VKGIPEDKNPFKEKGSCIIS) is disordered. Residue C70 is modified to Cysteine methyl ester. A lipid anchor (S-farnesyl cysteine) is attached at C70. A propeptide spans 71–73 (IIS) (removed in mature form).

This sequence belongs to the G protein gamma family. As to quaternary structure, g proteins are composed of 3 units, alpha, beta and gamma. Interacts with beta-1 and beta-3, but not with beta-2.

It is found in the cell membrane. Guanine nucleotide-binding proteins (G proteins) are involved as a modulator or transducer in various transmembrane signaling systems. The beta and gamma chains are required for the GTPase activity, for replacement of GDP by GTP, and for G protein-effector interaction. This Bos taurus (Bovine) protein is Guanine nucleotide-binding protein G(I)/G(S)/G(O) subunit gamma-11 (GNG11).